Here is a 136-residue protein sequence, read N- to C-terminus: Small ribosomal subunit protein uS11c (136 aa).

Belongs to the universal ribosomal protein uS11 family. In terms of assembly, part of the 30S ribosomal subunit.

It localises to the plastid. Its subcellular location is the chloroplast. The protein is Small ribosomal subunit protein uS11c of Guizotia abyssinica (Niger).